A 318-amino-acid chain; its full sequence is Ribosomal RNA small subunit methyltransferase H (318 aa).

Residues 34 to 36, D52, F79, D100, and Q107 contribute to the S-adenosyl-L-methionine site; that span reads GGY. The tract at residues 286-318 is disordered; sequence GPAPDEARANPRARSAKLRAAARTAAPAWETVS. Low complexity predominate over residues 303–318; the sequence is LRAAARTAAPAWETVS.

The protein belongs to the methyltransferase superfamily. RsmH family.

It is found in the cytoplasm. It carries out the reaction cytidine(1402) in 16S rRNA + S-adenosyl-L-methionine = N(4)-methylcytidine(1402) in 16S rRNA + S-adenosyl-L-homocysteine + H(+). Functionally, specifically methylates the N4 position of cytidine in position 1402 (C1402) of 16S rRNA. The polypeptide is Ribosomal RNA small subunit methyltransferase H (Paramagnetospirillum magneticum (strain ATCC 700264 / AMB-1) (Magnetospirillum magneticum)).